Reading from the N-terminus, the 209-residue chain is PF03932 family protein CutC (209 aa).

It localises to the cytoplasm. The chain is PF03932 family protein CutC from Streptococcus pyogenes serotype M6 (strain ATCC BAA-946 / MGAS10394).